The following is a 212-amino-acid chain: Thiamine-phosphate synthase (212 aa).

Residues 35-39 (QLRRK) and Asn-67 contribute to the 4-amino-2-methyl-5-(diphosphooxymethyl)pyrimidine site. The Mg(2+) site is built by Asp-68 and Asp-87. A 4-amino-2-methyl-5-(diphosphooxymethyl)pyrimidine-binding site is contributed by Ser-106. 132–134 (TGS) contacts 2-[(2R,5Z)-2-carboxy-4-methylthiazol-5(2H)-ylidene]ethyl phosphate. Lys-135 serves as a coordination point for 4-amino-2-methyl-5-(diphosphooxymethyl)pyrimidine. Residues Gly-163 and 183–184 (IS) each bind 2-[(2R,5Z)-2-carboxy-4-methylthiazol-5(2H)-ylidene]ethyl phosphate.

This sequence belongs to the thiamine-phosphate synthase family. Mg(2+) is required as a cofactor.

It catalyses the reaction 2-[(2R,5Z)-2-carboxy-4-methylthiazol-5(2H)-ylidene]ethyl phosphate + 4-amino-2-methyl-5-(diphosphooxymethyl)pyrimidine + 2 H(+) = thiamine phosphate + CO2 + diphosphate. The catalysed reaction is 2-(2-carboxy-4-methylthiazol-5-yl)ethyl phosphate + 4-amino-2-methyl-5-(diphosphooxymethyl)pyrimidine + 2 H(+) = thiamine phosphate + CO2 + diphosphate. The enzyme catalyses 4-methyl-5-(2-phosphooxyethyl)-thiazole + 4-amino-2-methyl-5-(diphosphooxymethyl)pyrimidine + H(+) = thiamine phosphate + diphosphate. Its pathway is cofactor biosynthesis; thiamine diphosphate biosynthesis; thiamine phosphate from 4-amino-2-methyl-5-diphosphomethylpyrimidine and 4-methyl-5-(2-phosphoethyl)-thiazole: step 1/1. Condenses 4-methyl-5-(beta-hydroxyethyl)thiazole monophosphate (THZ-P) and 2-methyl-4-amino-5-hydroxymethyl pyrimidine pyrophosphate (HMP-PP) to form thiamine monophosphate (TMP). The protein is Thiamine-phosphate synthase of Chlorobium luteolum (strain DSM 273 / BCRC 81028 / 2530) (Pelodictyon luteolum).